The chain runs to 925 residues: Alanine--tRNA ligase (925 aa).

H611, H615, C714, and H718 together coordinate Zn(2+).

Belongs to the class-II aminoacyl-tRNA synthetase family. The cofactor is Zn(2+).

It is found in the cytoplasm. The catalysed reaction is tRNA(Ala) + L-alanine + ATP = L-alanyl-tRNA(Ala) + AMP + diphosphate. Functionally, catalyzes the attachment of alanine to tRNA(Ala) in a two-step reaction: alanine is first activated by ATP to form Ala-AMP and then transferred to the acceptor end of tRNA(Ala). Also edits incorrectly charged Ser-tRNA(Ala) and Gly-tRNA(Ala) via its editing domain. The polypeptide is Alanine--tRNA ligase (Methanosarcina acetivorans (strain ATCC 35395 / DSM 2834 / JCM 12185 / C2A)).